The primary structure comprises 938 residues: Isoleucine--tRNA ligase (938 aa).

The short motif at 58–68 (PYANGSIHIGH) is the 'HIGH' region element. E561 is a binding site for L-isoleucyl-5'-AMP. The short motif at 602–606 (KMSKS) is the 'KMSKS' region element. K605 is a binding site for ATP. Positions 901, 904, 921, and 924 each coordinate Zn(2+).

The protein belongs to the class-I aminoacyl-tRNA synthetase family. IleS type 1 subfamily. As to quaternary structure, monomer. It depends on Zn(2+) as a cofactor.

It localises to the cytoplasm. The catalysed reaction is tRNA(Ile) + L-isoleucine + ATP = L-isoleucyl-tRNA(Ile) + AMP + diphosphate. Functionally, catalyzes the attachment of isoleucine to tRNA(Ile). As IleRS can inadvertently accommodate and process structurally similar amino acids such as valine, to avoid such errors it has two additional distinct tRNA(Ile)-dependent editing activities. One activity is designated as 'pretransfer' editing and involves the hydrolysis of activated Val-AMP. The other activity is designated 'posttransfer' editing and involves deacylation of mischarged Val-tRNA(Ile). The chain is Isoleucine--tRNA ligase from Baumannia cicadellinicola subsp. Homalodisca coagulata.